Consider the following 98-residue polypeptide: Small ribosomal subunit protein bS20 (98 aa).

Residues 76 to 98 (HPNNGARKKSRLASKLKPIEQTA) form a disordered region.

Belongs to the bacterial ribosomal protein bS20 family.

Binds directly to 16S ribosomal RNA. This is Small ribosomal subunit protein bS20 from Trichormus variabilis (strain ATCC 29413 / PCC 7937) (Anabaena variabilis).